The following is a 188-amino-acid chain: UPF0398 protein SE_1135 (188 aa).

It belongs to the UPF0398 family.

The chain is UPF0398 protein SE_1135 from Staphylococcus epidermidis (strain ATCC 12228 / FDA PCI 1200).